Consider the following 207-residue polypeptide: Na(+)-translocating NADH-quinone reductase subunit D (207 aa).

6 helical membrane-spanning segments follow: residues 20-40, 41-61, 69-89, 102-122, 130-150, and 177-197; these read IALQILGICSALAVTTQLQTA, FVMAIAVSLVTAFSSMFISMI, IRIIVQMAIIASLVILVDQIL, VFVGLIITNCIVMGRAEAFAM, FVDGIGNGLGYGAMLVIVAFL, and NGLFLLAPSAFFIIGFVIWAI.

It belongs to the NqrDE/RnfAE family. In terms of assembly, composed of six subunits; NqrA, NqrB, NqrC, NqrD, NqrE and NqrF.

The protein resides in the cell inner membrane. The enzyme catalyses a ubiquinone + n Na(+)(in) + NADH + H(+) = a ubiquinol + n Na(+)(out) + NAD(+). In terms of biological role, NQR complex catalyzes the reduction of ubiquinone-1 to ubiquinol by two successive reactions, coupled with the transport of Na(+) ions from the cytoplasm to the periplasm. NqrA to NqrE are probably involved in the second step, the conversion of ubisemiquinone to ubiquinol. The protein is Na(+)-translocating NADH-quinone reductase subunit D of Haemophilus ducreyi (strain 35000HP / ATCC 700724).